Consider the following 197-residue polypeptide: Cell division protein SepF (197 aa).

The interval 15–91 is disordered; that stretch reads DEEEVESPEE…PPSKSNGKNV (77 aa). Positions 22 to 31 are enriched in basic and acidic residues; it reads PEERQRRVVQ. Residues 37–47 are compositionally biased toward low complexity; sequence TNNVQQNQPQQ. Composition is skewed to polar residues over residues 48 to 58 and 78 to 91; these read SERSYSNQSKL and RMNQ…GKNV.

It belongs to the SepF family. As to quaternary structure, homodimer. Interacts with FtsZ.

It localises to the cytoplasm. In terms of biological role, cell division protein that is part of the divisome complex and is recruited early to the Z-ring. Probably stimulates Z-ring formation, perhaps through the cross-linking of FtsZ protofilaments. Its function overlaps with FtsA. This is Cell division protein SepF from Staphylococcus haemolyticus (strain JCSC1435).